The chain runs to 960 residues: Putative helicase L207/L206 (960 aa).

Positions 1–32 are disordered; that stretch reads MTSKTENKKSVSSKTGRTTNNSTNKKTTEKSV. The segment covering 12–25 has biased composition (low complexity); that stretch reads SSKTGRTTNNSTNK. The region spanning 646 to 807 is the SF3 helicase domain; sequence SMREYILTLL…FIKHSEATKK (162 aa).

The protein is Putative helicase L207/L206 of Acanthamoeba polyphaga mimivirus (APMV).